A 481-amino-acid polypeptide reads, in one-letter code: Glutamate--tRNA ligase (481 aa).

The short motif at Pro28–Gly38 is the 'HIGH' region element. Residues Arg139 to Pro148 are compositionally biased toward basic and acidic residues. The disordered stretch occupies residues Arg139–Arg159. The 'KMSKS' region motif lies at Lys260–Arg264. Lys263 contacts ATP.

The protein belongs to the class-I aminoacyl-tRNA synthetase family. Glutamate--tRNA ligase type 1 subfamily. As to quaternary structure, monomer.

It localises to the cytoplasm. It carries out the reaction tRNA(Glu) + L-glutamate + ATP = L-glutamyl-tRNA(Glu) + AMP + diphosphate. Its function is as follows. Catalyzes the attachment of glutamate to tRNA(Glu) in a two-step reaction: glutamate is first activated by ATP to form Glu-AMP and then transferred to the acceptor end of tRNA(Glu). The chain is Glutamate--tRNA ligase from Bordetella bronchiseptica (strain ATCC BAA-588 / NCTC 13252 / RB50) (Alcaligenes bronchisepticus).